The sequence spans 834 residues: DIS3-like exonuclease 2 (834 aa).

The segment covering 1–23 has biased composition (polar residues); that stretch reads MHNSEFLSPVQSGTQRGTNRSIL. A disordered region spans residues 1–35; the sequence is MHNSEFLSPVQSGTQRGTNRSILNNKKSGKGKKKS. Positions 354 and 363 each coordinate Mg(2+).

Belongs to the RNR ribonuclease family. DIS3L2 subfamily. The cofactor is Mg(2+). Mn(2+) is required as a cofactor.

Its subcellular location is the cytoplasm. It is found in the P-body. In terms of biological role, 3'-5'-exoribonuclease that specifically recognizes RNAs polyuridylated at their 3' end and mediates their degradation. Component of an exosome-independent RNA degradation pathway that mediates degradation of both mRNAs and miRNAs that have been polyuridylated by a terminal uridylyltransferase. Essential for correct mitosis, and negatively regulates cell proliferation. The protein is DIS3-like exonuclease 2 of Xenopus tropicalis (Western clawed frog).